We begin with the raw amino-acid sequence, 309 residues long: Myristoylated alanine-rich C-kinase substrate (309 aa).

The tract at residues 1 to 309 (MGAQFSKTAA…PEAPPAPTAE (309 aa)) is disordered. Glycine 2 carries N-myristoyl glycine lipidation. A Phosphothreonine modification is found at threonine 15. A phosphoserine mark is found at serine 26, serine 27, serine 29, serine 46, serine 63, and serine 74. Residues 26–35 (SSPSKANGQE) are compositionally biased toward polar residues. Composition is skewed to low complexity over residues 73–82 (ASGSAATPAA), 89–98 (AAATEPGAGA), and 109–142 (AEPSSPAAEAEGASASSTSSPKAEDGAAPSPSSE). Threonine 79 carries the post-translational modification Phosphothreonine. A Phosphoserine; by MAPK modification is found at serine 113. Phosphoserine occurs at positions 122, 128, 138, 140, and 141. Threonine 143 bears the Phosphothreonine mark. Basic residues predominate over residues 145–157 (KKKKKRFSFKKSF). The interval 145 to 169 (KKKKKRFSFKKSFKLSGFSFKKSKK) is calmodulin-binding (PSD). Serine 152 and serine 156 each carry phosphoserine; by PKC. At serine 160 the chain carries Phosphoserine. Residue serine 163 is modified to Phosphoserine; by PKC. Lysine 165 is modified (N6-acetyllysine). Phosphoserine is present on serine 171. A compositionally biased stretch (low complexity) spans 190-203 (AAAAGGEGAAAPGE). Gly residues predominate over residues 204–215 (QAGGAGAEGAAG). Position 246 is a phosphoserine (serine 246). Positions 256 to 290 (PAPGATAGDASSAAGPEQEAPAATDEAAASAAPAA) are enriched in low complexity. The residue at position 291 (serine 291) is a Phosphoserine. The span at 291–309 (SPEPQPECSPEAPPAPTAE) shows a compositional bias: pro residues.

This sequence belongs to the MARCKS family. Interacts with CDC42. Interacts with GTP-bound form of RAB10. Interacts with calmodulin/CALM1. Post-translationally, acetylated at Lys-165 by KAT5; acetylation is required for its subsequent phosphorylation. Deacetylated by SIRT2. Phosphorylation by PKC displaces MARCKS from the membrane. It also inhibits the F-actin cross-linking activity. PKC-mediated phosphorylation increases 4 to 5-fold upon TNF-alpha or LPS induction. In terms of processing, myristoylated. A proper myristoylation is essential for the proper distribution to the plasma membrane. Post-translationally, phosphorylation by PKC displaces MARCKS from the membrane. It also inhibits the F-actin cross-linking activity. In terms of tissue distribution, brain, spleen, less in kidney and heart, and very low levels in liver.

The protein resides in the cell membrane. Its subcellular location is the cytoplasm. It is found in the cytoskeleton. Membrane-associated protein that plays a role in the structural modulation of the actin cytoskeleton, chemotaxis, motility, cell adhesion, phagocytosis, and exocytosis through lipid sequestering and/or protein docking to membranes. Thus, exerts an influence on a plethora of physiological processes, such as embryonic development, tissue regeneration, neuronal plasticity, and inflammation. Sequesters phosphatidylinositol 4,5-bisphosphate (PIP2) at lipid rafts in the plasma membrane of quiescent cells, an action reversed by protein kinase C, ultimately inhibiting exocytosis. During inflammation, promotes the migration of inflammatory cells and the secretion of cytokines such as tumor necrosis factor (TNF), particularly in macrophages. Plays an essential role in bacteria-induced intracellular reactive oxygen species (ROS) formation in the monocytic cell type. Participates in the regulation of neurite initiation and outgrowth by interacting with components of cellular machinery including CDC42 that regulates cell shape and process extension through modulation of the cytoskeleton. Also plays a role in axon development by mediating docking and fusion of RAB10-positive vesicles with the plasma membrane. The polypeptide is Myristoylated alanine-rich C-kinase substrate (Marcks) (Mus musculus (Mouse)).